Here is a 304-residue protein sequence, read N- to C-terminus: DCN1-like protein 3 (304 aa).

Disordered regions lie at residues 1–87 and 284–304; these read MGQC…EESS and EGEG…EEQT. A lipid anchor (N-myristoyl glycine) is attached at Gly-2. The DCUN1 domain occupies 86 to 278; sequence SSLQRLEELF…LFDTFVEWEM (193 aa).

As to quaternary structure, part of a complex containing DCUN1D3, CUL3 and RBX1. Interacts (via the DCUN1 domain) with the unneddylated cullins: interacts with CUL1, CUL2, CUL3, CUL4A, CUL4B and CUL5; these interactions promote the cullin neddylation and the identity of the cullin dictates the affinity of the interaction. Interacts preferentially with CUL3; this interaction triggers the relocalization of CUL3 to the cell membrane where CUL3 is neddylated. Interacts (via DCUN1 domain) with RBX1. May also interact with regulators or subunits of cullin-RING ligases such as RNF7, ELOB and DDB1; these interactions are bridged by cullins. Interacts (via DCUN1 domain) with CAND1; this interaction is bridged by cullins and strongly inhibits cullin neddylation. These CAND-cullin-DCNL complexes can only be neddylated in the presence of a substrate adapter. Interacts (via DCUN1 domain) with the N-terminally acetylated form of UBE2M and UBE2F.

The protein resides in the cell membrane. It is found in the cytoplasm. Its subcellular location is the nucleus. It localises to the perinuclear region. Its function is as follows. Contributes to the neddylation of all cullins by transferring NEDD8 from N-terminally acetylated NEDD8-conjugating E2s enzyme to different cullin C-terminal domain-RBX complexes and may play a role in the cell cycle progression by regulating the SCF ubiquitin E3 ligase complex, after UV damage. At the cell membrane, can promote and as well inhibit cullins neddylation. This Bos taurus (Bovine) protein is DCN1-like protein 3.